A 474-amino-acid polypeptide reads, in one-letter code: MTKGDWEAVIGLEVHAQVSSKTKLFSSSSTEFGAEHNTQVSLVDAAMPGTLPILNYYSIEQAIRTGLALSAEINKSSYFDRKNYFYPDLPQGYQITQFFEPIVKNGRIFINNNKKEVRIARIHLEQDAGKSIHEESKTYVDLNRAGVALMEIVSEPDLRSSEEAAEFMKKLRQILRYIGSCDGDMEKGSLRCDANVSVRPKGSSTFGTRCEIKNLNSICYIMQAIDYEIQRQIEILESGEKISQDTLLFDVSLGKTKVMRNKEDASDYRYFPEPDLLPVEISQDKIDSIRSSLPELPDQKKLRYIRELSINKYDADVITSDKAIANYFEELIKKHDSKLAVTWLTVELFGRLNKAGIDIVSSPIKANALSELLDFIVDGTISARLGKQVFDIMFETGKPASLIIKEQDLKQITDKGQISEIIDKIINDNQDKVQEYQNGKTKLYGFFVGEVMKLTKGKASPDVVNFILSEKLSS.

Belongs to the GatB/GatE family. GatB subfamily. Heterotrimer of A, B and C subunits.

It carries out the reaction L-glutamyl-tRNA(Gln) + L-glutamine + ATP + H2O = L-glutaminyl-tRNA(Gln) + L-glutamate + ADP + phosphate + H(+). The enzyme catalyses L-aspartyl-tRNA(Asn) + L-glutamine + ATP + H2O = L-asparaginyl-tRNA(Asn) + L-glutamate + ADP + phosphate + 2 H(+). Its function is as follows. Allows the formation of correctly charged Asn-tRNA(Asn) or Gln-tRNA(Gln) through the transamidation of misacylated Asp-tRNA(Asn) or Glu-tRNA(Gln) in organisms which lack either or both of asparaginyl-tRNA or glutaminyl-tRNA synthetases. The reaction takes place in the presence of glutamine and ATP through an activated phospho-Asp-tRNA(Asn) or phospho-Glu-tRNA(Gln). The chain is Aspartyl/glutamyl-tRNA(Asn/Gln) amidotransferase subunit B from Wolbachia sp. subsp. Brugia malayi (strain TRS).